We begin with the raw amino-acid sequence, 297 residues long: Acetyl-coenzyme A carboxylase carboxyl transferase subunit beta (297 aa).

Residues 27–296 (LWHKCPSCEA…PVETSQVTAK (270 aa)) form the CoA carboxyltransferase N-terminal domain. Cysteine 31, cysteine 34, cysteine 50, and cysteine 53 together coordinate Zn(2+). The C4-type zinc-finger motif lies at 31–53 (CPSCEAVLYRPELEKTLDVCPKC).

The protein belongs to the AccD/PCCB family. Acetyl-CoA carboxylase is a heterohexamer composed of biotin carboxyl carrier protein (AccB), biotin carboxylase (AccC) and two subunits each of ACCase subunit alpha (AccA) and ACCase subunit beta (AccD). Zn(2+) is required as a cofactor.

The protein localises to the cytoplasm. The enzyme catalyses N(6)-carboxybiotinyl-L-lysyl-[protein] + acetyl-CoA = N(6)-biotinyl-L-lysyl-[protein] + malonyl-CoA. It participates in lipid metabolism; malonyl-CoA biosynthesis; malonyl-CoA from acetyl-CoA: step 1/1. Component of the acetyl coenzyme A carboxylase (ACC) complex. Biotin carboxylase (BC) catalyzes the carboxylation of biotin on its carrier protein (BCCP) and then the CO(2) group is transferred by the transcarboxylase to acetyl-CoA to form malonyl-CoA. This chain is Acetyl-coenzyme A carboxylase carboxyl transferase subunit beta, found in Stutzerimonas stutzeri (strain A1501) (Pseudomonas stutzeri).